A 254-amino-acid chain; its full sequence is uncharacterized protein (254 aa).

Helical transmembrane passes span 41-61 (LFVFLFFLFATTISFTQIKII), 64-84 (ILQAPAVGIKFLQLAPGEYFF), 91-111 (IYCGIVATTPFAVYQVILYIL), 125-145 (LLISSVLLFITGGIFAYFVLA), 146-166 (PAALTFLISYGSDIVEPLWSF), 172-192 (FILLLLLSTGLAFEIPIIQLL), 204-224 (MIRAWRYIIIIATIAGAILTP), and 232-252 (LIMSSAVLLLYFGGIVILLVL).

Belongs to the TatC family.

It localises to the plastid. The protein resides in the chloroplast membrane. This is an uncharacterized protein from Pyropia yezoensis (Susabi-nori).